The primary structure comprises 524 residues: Cytochrome P450 monooxygenase ATR4 (524 aa).

Residues 13-36 (IITYLDSLTWVGMALPLFSLCWAI) traverse the membrane as a helical segment. 3 N-linked (GlcNAc...) asparagine glycosylation sites follow: N291, N444, and N454.

It belongs to the cytochrome P450 family. Heme is required as a cofactor.

The protein localises to the membrane. The protein operates within mycotoxin biosynthesis. Its function is as follows. Cytochrome P450 monooxygenase; part of the core atranone cluster (CAC) which products are predicted to catalyze most or all steps of mycotoxin atranone synthesis, starting from geranylgeranyl pyrophosphate (GGPP). The initial cyclization of GGPP to dolabellane is probably performed by the terpene cyclase ATR13. The Baeyer-Villiger oxidation near the end of the atranone synthesis, which converts atranones D and E to atranones F and G is predicted to be catalyzed by the monooxygenase ATR8. Of the CAC's other predicted gene products, the reducing PKS ATR6 might synthesize a polyketide chain. This polyketide is probably transferred onto the atranone backbone by the polyketide transferase ATR5. Other predicted CAC products include 4 oxygenases (ATR2, ATR3, ATR4, and ATR14), 3 short-chain reductases (ATR7, ATR9, and ATR10), and a methyltransferase (ATR12). These may all be involved in the various steps of atranone biosynthesis, although their specific roles must await experimental determination. The protein is Cytochrome P450 monooxygenase ATR4 of Stachybotrys chlorohalonatus (strain IBT 40285).